The sequence spans 269 residues: Ribosomal RNA small subunit methyltransferase A (269 aa).

Residues asparagine 20, leucine 22, glycine 47, glutamate 68, aspartate 90, and asparagine 110 each coordinate S-adenosyl-L-methionine.

Belongs to the class I-like SAM-binding methyltransferase superfamily. rRNA adenine N(6)-methyltransferase family. RsmA subfamily.

The protein resides in the cytoplasm. It catalyses the reaction adenosine(1518)/adenosine(1519) in 16S rRNA + 4 S-adenosyl-L-methionine = N(6)-dimethyladenosine(1518)/N(6)-dimethyladenosine(1519) in 16S rRNA + 4 S-adenosyl-L-homocysteine + 4 H(+). In terms of biological role, specifically dimethylates two adjacent adenosines (A1518 and A1519) in the loop of a conserved hairpin near the 3'-end of 16S rRNA in the 30S particle. May play a critical role in biogenesis of 30S subunits. The protein is Ribosomal RNA small subunit methyltransferase A of Chlorobium phaeobacteroides (strain DSM 266 / SMG 266 / 2430).